A 145-amino-acid chain; its full sequence is Large ribosomal subunit protein mL59 (145 aa).

The segment covering 123–135 has biased composition (basic and acidic residues); the sequence is LKKTSKFKNERQK. Positions 123 to 145 are disordered; it reads LKKTSKFKNERQKASKIAKPSPF.

Belongs to the mitochondrion-specific ribosomal protein mL59 family. Component of the mitochondrial large ribosomal subunit (mt-LSU). Mature yeast 74S mitochondrial ribosomes consist of a small (37S) and a large (54S) subunit. The 37S small subunit contains a 15S ribosomal RNA (15S mt-rRNA) and at least 32 different proteins. The 54S large subunit contains a 21S rRNA (21S mt-rRNA) and at least 45 different proteins.

It is found in the mitochondrion. In terms of biological role, component of the mitochondrial ribosome (mitoribosome), a dedicated translation machinery responsible for the synthesis of mitochondrial genome-encoded proteins, including at least some of the essential transmembrane subunits of the mitochondrial respiratory chain. The mitoribosomes are attached to the mitochondrial inner membrane and translation products are cotranslationally integrated into the membrane. The chain is Large ribosomal subunit protein mL59 (mrpl25) from Schizosaccharomyces pombe (strain 972 / ATCC 24843) (Fission yeast).